The primary structure comprises 401 residues: MSTMQNCPHFGVCGGCSFPQSNYSDSLKKKEELLHQLFAPLVPSDMIAPIIPCSPSLRGRNKMEFSFFQTYEGEKSLGFISSTKPKKGIPVTTCLLIHEQTMDILKLTREWWDKHPELMAYFPPKNKGSLCTLTVRTGSPQQNFMVILTTSGTPEYRVNEACIDEWKEILLSSSLNIASIYWEEKVAARGISTYYETKLLYGAPSIQQKLSLPSDGNSASFSLRPRSFFQPQITQAAKIIETAKEFINPEGSETLLDLYCGAGTIGIMLSPYVKNVIGVEIIPDAVASAQENIKANNKEDCVEVYLEDAKAFCKRNENCKAPDVIIIDPPRCGMQSKVLKYILRIGSPKIVYISCNPKTQFQECADLISGGYRIKKMQPIDQFPYSTHLENIILLEREIDL.

[4Fe-4S] cluster contacts are provided by C7, C13, C16, and C94. Residues Q230, Y259, E280, and D328 each coordinate S-adenosyl-L-methionine. C355 functions as the Nucleophile in the catalytic mechanism.

It belongs to the class I-like SAM-binding methyltransferase superfamily. RNA M5U methyltransferase family.

This is an uncharacterized protein from Chlamydia pneumoniae (Chlamydophila pneumoniae).